Here is a 416-residue protein sequence, read N- to C-terminus: Basic salivary proline-rich protein 2 (416 aa).

An N-terminal signal peptide occupies residues 1–16 (MLLILLSVALLALSSA). Pyrrolidone carboxylic acid is present on glutamine 17. The segment covering 19–28 (LNEDVSQEES) has biased composition (polar residues). Positions 19–416 (LNEDVSQEES…QGGRPSRPPQ (398 aa)) are disordered. The residue at position 24 (serine 24) is a Phosphoserine. The segment covering 34–47 (GNPQGAPPQGGNKP) has biased composition (low complexity). Composition is skewed to pro residues over residues 48–104 (QGPP…PPPQ) and 112–165 (RSPP…PPPQ). Position 52 is a phosphoserine (serine 52). 15 tandem repeats follow at residues 53 to 72 (PPGK…QGPP), 74 to 93 (PPGK…QGPP), 94 to 113 (PPGK…SPRS), 114 to 133 (PPGK…QGPP), 135 to 154 (PPGK…QGPP), 155 to 174 (PPGK…RSSR), 176 to 195 (PPGK…QGPP), 197 to 216 (PPGK…QGPP), 217 to 236 (PPGK…QSAR), 238 to 257 (PPGK…QGPP), 259 to 278 (PPGK…QGPP), 279 to 298 (PPGK…RSSR), 300 to 319 (PPGK…QGPP), 321 to 340 (PPGK…QGPP), and 341 to 360 (PPGK…RSAR). Residues 53-360 (PPGKPQGPPP…QGGSKSRSAR (308 aa)) form a 15 X 20 AA approximate tandem repeats of P-P-G-K-P-Q-G-P-P-P-Q-G-[GD]-[NKS]-[KSQ]-[PRS]-[QRS] [GPS]-[PSAR]-[PSR] region. Asparagine 168 carries an N-linked (GlcNAc...) asparagine glycan. The segment covering 177-227 (PGKPQGPPPQGGNQPQGPPPPPGKPQGPPPQGGNKPQGPPPPGKPQGPPPQ) has biased composition (pro residues). Residue asparagine 230 is glycosylated (N-linked (GlcNAc...) asparagine). Serine 232 carries O-linked (Hex) serine glycosylation. Positions 239 to 289 (PGKPQGPPPQGGNQPQGPPPPPGKPQGPPPQGGNKPQGPPPPGKPQGPPPQ) are enriched in pro residues. A glycan (N-linked (GlcNAc...) asparagine) is linked at asparagine 272. Residues 290-300 (GGSKSRSSRSP) are compositionally biased toward low complexity. Composition is skewed to pro residues over residues 301-351 (PGKP…PPPQ) and 378-416 (QGPP…RPPQ).

Post-translationally, N- and O-glycosylated. In head and neck cancer patients, O-glycosylated with glucosylgalactosyl carbohydrate moiety. This modification would require prior hydroxylation on the lysine residue. Proteolytically cleaved at the tripeptide Xaa-Pro-Gln, where Xaa in the P(3) position is mostly lysine. The endoprotease may be of microbial origin. In terms of processing, pyroglutamate formation occurs on terminal Gln residues of cleaved peptides. Pyroglutamate formation found on at least Gln-398 and Gln-400.

The protein localises to the secreted. The protein is Basic salivary proline-rich protein 2 (PRB2) of Homo sapiens (Human).